A 94-amino-acid polypeptide reads, in one-letter code: Protein RnfH (94 aa).

The protein belongs to the UPF0125 (RnfH) family.

The sequence is that of Protein RnfH from Yersinia pestis bv. Antiqua (strain Antiqua).